The following is a 144-amino-acid chain: 3-dehydroquinate dehydratase (144 aa).

Tyrosine 24 (proton acceptor) is an active-site residue. Substrate-binding residues include asparagine 73, histidine 79, and aspartate 86. Histidine 99 (proton donor) is an active-site residue. Substrate-binding positions include 100-101 and arginine 110; that span reads LS.

The protein belongs to the type-II 3-dehydroquinase family. Homododecamer.

It catalyses the reaction 3-dehydroquinate = 3-dehydroshikimate + H2O. Its pathway is metabolic intermediate biosynthesis; chorismate biosynthesis; chorismate from D-erythrose 4-phosphate and phosphoenolpyruvate: step 3/7. Its function is as follows. Catalyzes a trans-dehydration via an enolate intermediate. The chain is 3-dehydroquinate dehydratase from Shewanella sp. (strain MR-4).